The primary structure comprises 724 residues: Disks large homolog 4 (724 aa).

Residues cysteine 3 and cysteine 5 are each lipidated (S-palmitoyl cysteine). The interval glutamine 15–serine 35 is disordered. 2 consecutive PDZ domains span residues glutamate 65 to arginine 151 and glutamate 160 to proline 246. A phosphoserine mark is found at serine 73 and serine 142. The residue at position 240 (tyrosine 240) is a Phosphotyrosine. Phosphoserine is present on serine 295. Residues arginine 313 to lysine 393 enclose the PDZ 3 domain. A phosphoserine mark is found at serine 415 and serine 418. Threonine 420 carries the phosphothreonine modification. Phosphoserine is present on residues serine 422, serine 425, serine 449, and serine 480. Residues lysine 428–glutamate 498 form the SH3 domain. Residues alanine 534–glutamate 709 enclose the Guanylate kinase-like domain. At tyrosine 580 the chain carries Phosphotyrosine. 2 positions are modified to phosphoserine: serine 606 and serine 654. Phosphotyrosine is present on tyrosine 715.

It belongs to the MAGUK family. In terms of assembly, interacts through its PDZ domains with ANO2 and NETO1. Interacts with KCNJ4. Interacts through its first two PDZ domains with GRIN2A, GRIN2B, GRIN2C and GRIN2D. Interacts with ERBB4. Interacts with KCNA1, KCNA2, KCNA3 and KCNA4. Interacts with LRRC4 and LRRC4B. Interacts with SYNGAP1. Interacts with ASIC3. Interacts with SEMA4C. Interacts with CXADR. Interacts with KCND2. Interacts (via first PDZ domain) with CRIPT. Interacts through its first PDZ domain with GRIK2 and KCNA4. Interacts through its second PDZ domain with the PDZ domain of NOS1 or the C-terminus of CAPON. Interacts through its third PDZ domain with NLGN1 and CRIPT, and probably with NLGN2 and NLGN3. Interacts through its guanylate kinase-like domain with DLGAP1/GKAP, DLGAP2, DLGAP3, DLGAP4, MAP1A, BEGAIN and SIPA1L1. Interacts through its guanylate kinase-like domain with KIF13B. Isoform 2 interacts through an L27 domain with HGS/HRS and the first L27 domain of CASK. Interacts with ANKS1B. Interacts with ADR1B. May interact with HTR2A. Interacts with ADAM22, KLHL17 and LGI1. Interacts with FRMPD4 (via C-terminus). Interacts with LRFN1 and LRFN2. Interacts with LRFN4. Interacts (via N-terminal tandem pair of PDZ domains) with GPER1 (via C-terminus tail motif); the interaction is direct and induces the increase of GPER1 protein levels residing at the plasma membrane surface in a estradiol-independent manner. Interacts (via N-terminus tandem pair of PDZ domains) with NOS1 (via N-terminal domain). Interacts with SHANK3. Interacts with GPR85. Interacts with CACNG2 and MPP2 (via the SH3-Guanylate kinase-like sub-module). Interacts with ADGRB1. Found in a complex with PRR7 and GRIN1. Interacts (via PDZ3 domain and to lesser degree via PDZ2 domain) with PRR7. Component of the postsynaptic hippocampal AMPA-type glutamate receptor (AMPAR) complex, at least composed of pore forming AMPAR subunits GRIA1, GRIA2 and GRIA3 and AMPAR auxiliary proteins SHISA6 and SHISA7. Interacts (via its first two PDZ domains) with SHISA6 and SHISA7 (via PDZ-binding motif); the interaction is direct. Interacts (via PDZ domain 2) with SEMA4F (via PDZ-binding motif); this interaction may promote translocation of DLG4/SAP90 to the membrane. Interacts with RPH3A and GRIN2A; this ternary complex regulates NMDA receptor composition at postsynaptic membranes. Interacts with ABR and BCR. Interacts with DGKI (via PDZ-binding motif); controls the localization of DGKI to the synapse. Interacts with C9orf72, SMCR8 and RAB39B. Interacts with ZDHHC5. Interacts with PTEN (via PDZ domain-binding motif); the interaction is induced by NMDA and is required for PTEN location at postsynaptic density. Found in a complex with GRIA1, GRIA2, GRIA3, GRIA4, CACNG8 and CNIH2. Interacts with FAM81A; the interaction facilitates condensate formation via liquid-liquid phase separation. Interacts with ADGRL3. Interacts with SORCS3. In terms of processing, palmitoylated. Palmitoylation is required for targeting to postsynaptic density, plasma membrane and synapses. Palmitoylation by ZDHHC2 occurs when the synaptic activity decreases and induces DLG4 synaptic clustering. Palmitoylation by ZDHHC15 regulates trafficking to the postsynaptic density and function in synaptogenesis. Palmitoylation may play a role in glutamate receptor GRIA1 synapse clustering. Depalmitoylated by ABHD17A and ABHD17B and to a lesser extent by ABHD17C, ABHD12, ABHD13, LYPLA1 and LYPLA2. Undergoes rapid synaptic palmitoylation/depalmitoylation cycle during neuronal development which slows down in mature neurons. Ubiquitinated by MDM2 in response to NMDA receptor activation, leading to proteasome-mediated degradation of DLG4 which is required for AMPA receptor endocytosis. As to expression, expressed in brain (at protein level). Detected in juxtaparanodal zones in the central nervous system and at nerve terminal plexuses of basket cells in the cerebellum. Expressed in cerebrum. Expressed in hippocampal neurons (at protein level). Isoform 1 and isoform 2: highly expressed in cerebellum, cortex, hippocampus, and corpus striatum.

It localises to the cell membrane. Its subcellular location is the postsynaptic density. The protein localises to the synapse. It is found in the cytoplasm. The protein resides in the cell projection. It localises to the axon. Its subcellular location is the dendritic spine. The protein localises to the dendrite. It is found in the presynapse. Functionally, postsynaptic scaffolding protein that plays a critical role in synaptogenesis and synaptic plasticity by providing a platform for the postsynaptic clustering of crucial synaptic proteins. Interacts with the cytoplasmic tail of NMDA receptor subunits and shaker-type potassium channels. Required for synaptic plasticity associated with NMDA receptor signaling. Overexpression or depletion of DLG4 changes the ratio of excitatory to inhibitory synapses in hippocampal neurons. May reduce the amplitude of ASIC3 acid-evoked currents by retaining the channel intracellularly. May regulate the intracellular trafficking of ADR1B. Also regulates AMPA-type glutamate receptor (AMPAR) immobilization at postsynaptic density keeping the channels in an activated state in the presence of glutamate and preventing synaptic depression. Under basal conditions, cooperates with FYN to stabilize palmitoyltransferase ZDHHC5 at the synaptic membrane through FYN-mediated phosphorylation of ZDHHC5 and its subsequent inhibition of association with endocytic proteins. The protein is Disks large homolog 4 of Rattus norvegicus (Rat).